Consider the following 207-residue polypeptide: Dephospho-CoA kinase (207 aa).

A DPCK domain is found at Ile-10–Ser-207. Gly-18 to Ala-23 contacts ATP.

It belongs to the CoaE family.

Its subcellular location is the cytoplasm. The enzyme catalyses 3'-dephospho-CoA + ATP = ADP + CoA + H(+). It participates in cofactor biosynthesis; coenzyme A biosynthesis; CoA from (R)-pantothenate: step 5/5. In terms of biological role, catalyzes the phosphorylation of the 3'-hydroxyl group of dephosphocoenzyme A to form coenzyme A. This is Dephospho-CoA kinase from Pseudomonas syringae pv. tomato (strain ATCC BAA-871 / DC3000).